The following is a 141-amino-acid chain: Hemoglobin subunit alpha (141 aa).

The Globin domain maps to 1 to 141 (VLSPADKTNV…VSTVLTSKYR (141 aa)). Phosphoserine is present on S3. At K7 the chain carries N6-succinyllysine. T8 is modified (phosphothreonine). Residue K11 is modified to N6-succinyllysine. K16 carries the N6-acetyllysine; alternate modification. K16 carries the post-translational modification N6-succinyllysine; alternate. A Phosphotyrosine modification is found at Y24. Phosphoserine is present on S35. K40 carries the post-translational modification N6-succinyllysine. S49 carries the post-translational modification Phosphoserine. H58 contacts O2. Position 87 (H87) interacts with heme b. S102 carries the post-translational modification Phosphoserine. T108 bears the Phosphothreonine mark. 2 positions are modified to phosphoserine: S124 and S131. 2 positions are modified to phosphothreonine: T134 and T137. The residue at position 138 (S138) is a Phosphoserine.

The protein belongs to the globin family. Heterotetramer of two alpha chains and two beta chains. In terms of tissue distribution, red blood cells.

Functionally, involved in oxygen transport from the lung to the various peripheral tissues. In terms of biological role, hemopressin acts as an antagonist peptide of the cannabinoid receptor CNR1. Hemopressin-binding efficiently blocks cannabinoid receptor CNR1 and subsequent signaling. The protein is Hemoglobin subunit alpha (HBA) of Cebus capucinus (White-faced sapajou).